We begin with the raw amino-acid sequence, 172 residues long: Protein GrpE (172 aa).

Residues Met1–Leu23 form a disordered region.

This sequence belongs to the GrpE family. As to quaternary structure, homodimer.

The protein resides in the cytoplasm. In terms of biological role, participates actively in the response to hyperosmotic and heat shock by preventing the aggregation of stress-denatured proteins, in association with DnaK and GrpE. It is the nucleotide exchange factor for DnaK and may function as a thermosensor. Unfolded proteins bind initially to DnaJ; upon interaction with the DnaJ-bound protein, DnaK hydrolyzes its bound ATP, resulting in the formation of a stable complex. GrpE releases ADP from DnaK; ATP binding to DnaK triggers the release of the substrate protein, thus completing the reaction cycle. Several rounds of ATP-dependent interactions between DnaJ, DnaK and GrpE are required for fully efficient folding. This is Protein GrpE from Xylella fastidiosa (strain M23).